The primary structure comprises 484 residues: GTPase Obg (484 aa).

One can recognise an Obg domain in the interval 7-164 (PRFVDRVVIH…RDLTLELKTV (158 aa)). Positions 21–43 (SGGNGCASVHREKFKPLGGPDGG) are disordered. The OBG-type G domain maps to 165 to 345 (ADVGLVGFPS…LIFGLSQMIS (181 aa)). GTP contacts are provided by residues 171–178 (GFPSAGKS), 196–200 (FTTLV), 217–220 (DVPG), 297–300 (NKID), and 326–328 (STA). The Mg(2+) site is built by serine 178 and threonine 198. The OCT domain occupies 363 to 441 (PIPVDDSGFT…IGEMTFDWEP (79 aa)). The interval 439-484 (WEPQTPAGEPVAMSGRGTDPRLDSNKRVGAAERKAARSRRREHGDG) is disordered. Positions 456–473 (TDPRLDSNKRVGAAERKA) are enriched in basic and acidic residues. The span at 474-484 (ARSRRREHGDG) shows a compositional bias: basic residues.

It belongs to the TRAFAC class OBG-HflX-like GTPase superfamily. OBG GTPase family. As to quaternary structure, monomer. It depends on Mg(2+) as a cofactor.

It localises to the cytoplasm. Functionally, an essential GTPase which binds GTP, GDP and possibly (p)ppGpp with moderate affinity, with high nucleotide exchange rates and a fairly low GTP hydrolysis rate. Plays a role in control of the cell cycle, stress response, ribosome biogenesis and in those bacteria that undergo differentiation, in morphogenesis control. The sequence is that of GTPase Obg from Mycobacterium tuberculosis (strain CDC 1551 / Oshkosh).